Reading from the N-terminus, the 625-residue chain is MSTNQETRGFQSEVKQLLQLMIHSLYSNKEIFLRELISNASDAADKLRFKALSNPALYEGDGELRVRVSFDETLGTLTISDNGIGMNREQVIDHLGTIAKSGTKEFLNSLGTDQAKDSQLIGQFGVGFYSAFIVADKVTVKTRAAGETQAVLWESAGEGDYTVADIEKATRGTDVILHLREEEKEFLSEWRLREIIGKYSDHIGLPVEIQTTEYNEEGKASGQKWEKINKAQALWTRSKNEISDEEYQEFYKHLSHDYNDSLIWAHNKVEGKQEYTSLLYVPAKAPWDMFNREQKHGLKLYVQRVFIMDDAEVFMPNYLRFMRGLLDTNDLPLNVSREILQENKITASLRAALTKRALQLLEKLAKDDQAKYQTFWNEFGLVLKEGVGEDFANKQQIASLFRFASTQTDSSEQTVSLADYVGRMKEGQKAIYFLTADSYVAAKNSPHLELFNKKGIEVLLLSDRIDEWVVGHLTEFDGKPLQSITKSDLDLGDLADKEQEESQKAQQAEFGSFLERAQSYFGERVKKVVLTHRLTDTPAVVSTDNDEMTTQMAKLFAAMGQKAPEVKYTFELNPDHQMVKKIADLTDETEFNDWIELLFEQALLAERGSLENPAAFIKRMNKLLG.

Residues 1-337 form an a; substrate-binding region; sequence MSTNQETRGF…TNDLPLNVSR (337 aa). The interval 338-554 is b; that stretch reads EILQENKITA…NDEMTTQMAK (217 aa). A c region spans residues 555–625; the sequence is LFAAMGQKAP…FIKRMNKLLG (71 aa).

This sequence belongs to the heat shock protein 90 family. As to quaternary structure, homodimer.

Its subcellular location is the cytoplasm. Molecular chaperone. Has ATPase activity. The chain is Chaperone protein HtpG from Actinobacillus pleuropneumoniae serotype 3 (strain JL03).